Here is a 398-residue protein sequence, read N- to C-terminus: Isopenicillin N epimerase (398 aa).

Lys217 is modified (N6-(pyridoxal phosphate)lysine).

Belongs to the class-V pyridoxal-phosphate-dependent aminotransferase family. It depends on pyridoxal 5'-phosphate as a cofactor.

It carries out the reaction isopenicillin N = penicillin N. The protein operates within antibiotic biosynthesis; cephalosporin C biosynthesis. Its function is as follows. Catalyzes the reversible isomerization between isopenicillin N and penicillin N. This Streptomyces clavuligerus protein is Isopenicillin N epimerase (cefD).